A 387-amino-acid chain; its full sequence is MQNINQIKLTWISFFSYAFTGALIVITGMIMGDIADYFNLSVSEMSNIFTFLNAGILISIFLNSWLIDLISIKKQLIFGFLFSIIAILGIVFSTSILLFSINIFILGLVSGITMSIGTFIITCLYSGEKRGSQLLLTDSFFSMSGMIFPIISAYLLDRKILWYWIYVFLGIIYFLIFILTVKSHFPVSEEKTKNNNEIKNLNINIILLSISALLYILGQLSFISWVPQYTTEIININIKKTGVLVSNFWMAYMIGMWCFSFIIKFFNLQRMFIFLTGSSSVLMYCFIYSKSYLALKYTIISLGFFSSAIYTIIITLASLETKKPSAKLINLILFFGTIGTLLTFIITSPIVAKKGLYTTLIFSNVLYVIVFFLSCIIFKNSKKKDHC.

Transmembrane regions (helical) follow at residues 11–31, 47–67, 76–96, 101–121, 134–154, 160–180, 205–225, 243–263, 271–291, 299–319, 331–351, and 358–378; these read WISF…GMIM, NIFT…SWLI, LIFG…STSI, INIF…TFII, LLLT…ISAY, ILWY…FILT, IILL…FISW, VLVS…SFII, MFIF…YSKS, IISL…LASL, LILF…SPIV, and TTLI…CIIF.

Belongs to the major facilitator superfamily. TsgA family.

It localises to the cell membrane. This chain is Protein TsgA homolog, found in Buchnera aphidicola subsp. Schizaphis graminum (strain Sg).